We begin with the raw amino-acid sequence, 525 residues long: GMP synthase [glutamine-hydrolyzing] (525 aa).

The 200-residue stretch at 8–207 folds into the Glutamine amidotransferase type-1 domain; that stretch reads KILILDFGSQ…ALDICGCAAN (200 aa). Cysteine 85 acts as the Nucleophile in catalysis. Catalysis depends on residues histidine 181 and glutamate 183. Residues 208–400 form the GMPS ATP-PPase domain; it reads WKPSSIIEDA…LGLPYNMLYR (193 aa). 235 to 241 contacts ATP; that stretch reads SGGVDSS.

As to quaternary structure, homodimer.

The enzyme catalyses XMP + L-glutamine + ATP + H2O = GMP + L-glutamate + AMP + diphosphate + 2 H(+). Its pathway is purine metabolism; GMP biosynthesis; GMP from XMP (L-Gln route): step 1/1. Functionally, catalyzes the synthesis of GMP from XMP. This chain is GMP synthase [glutamine-hydrolyzing], found in Shewanella sp. (strain MR-7).